Reading from the N-terminus, the 107-residue chain is UPF0145 protein Ent638_1382 (107 aa).

Belongs to the UPF0145 family.

In Enterobacter sp. (strain 638), this protein is UPF0145 protein Ent638_1382.